We begin with the raw amino-acid sequence, 139 residues long: I-Kappa-B like protein N1 (139 aa).

ANK repeat units follow at residues 16-48, 54-87, and 92-122; these read NGEN…QYLL, EGRK…DVNG, and TGDT…NINA.

The protein belongs to the polydnaviridae I-Kappa-B-like protein family.

Its function is as follows. Suppresses the host immune response through NF-kappa-B inactivation. Possesses ankyrin repeat domain required for NF-kappa-B binding but lack the regulatory regions required for dissociation from NF-kappa-B and degradation. Therefore, prevents host NF-kappa-B release and subsequent activation. The polypeptide is I-Kappa-B like protein N1 (N2) (Microplitis demolitor bracovirus (isolate Webb) (MdBV)).